A 698-amino-acid chain; its full sequence is Testis-specific gene 10 protein (698 aa).

The residue at position 163 (Ser-163) is a Phosphoserine. Residues 556 to 689 (QMANERISMQ…SPDRGLDRSL (134 aa)) form an interaction with HIF1A region. Residues 659–670 (HMSSTMKPNTKC) are compositionally biased toward polar residues. The interval 659–685 (HMSSTMKPNTKCHSPERAHHRSPDRGL) is disordered. Basic and acidic residues predominate over residues 671–685 (HSPERAHHRSPDRGL). A Phosphoserine modification is found at Ser-688.

Belongs to the CEP135/TSGA10 family. In terms of assembly, interacts with HIF1A. Processed into N-terminal 27-kDa and C-terminal 55-kDa fragments. Expressed in the testis, in spermatozoa (at protein level). Expressed in actively dividing fetal tissues, including sternum, intestine, limb, kidney and stomach.

The protein localises to the cytoplasm. The protein resides in the cytoskeleton. Its subcellular location is the microtubule organizing center. It is found in the centrosome. It localises to the centriole. Plays a role in spermatogenesis. When overexpressed, prevents nuclear localization of HIF1A. The protein is Testis-specific gene 10 protein (TSGA10) of Homo sapiens (Human).